The primary structure comprises 155 residues: Cyanate hydratase (155 aa).

Active-site residues include arginine 101, glutamate 104, and serine 127.

This sequence belongs to the cyanase family.

The enzyme catalyses cyanate + hydrogencarbonate + 3 H(+) = NH4(+) + 2 CO2. Catalyzes the reaction of cyanate with bicarbonate to produce ammonia and carbon dioxide. In Coccidioides posadasii (strain C735) (Valley fever fungus), this protein is Cyanate hydratase.